Consider the following 389-residue polypeptide: Leucine aminopeptidase 1 (389 aa).

The N-terminal stretch at 1–19 (MKLPALLTLGVAASTMVLA) is a signal peptide. The propeptide occupies 20 to 88 (AIAPDQVPLN…LPKVFPTPAV (69 aa)). 5 N-linked (GlcNAc...) asparagine glycosylation sites follow: Asn96, Asn119, Asn149, Asn164, and Asn181. 2 residues coordinate Zn(2+): His189 and Asp208. Asn233 carries an N-linked (GlcNAc...) asparagine glycan. 2 residues coordinate Zn(2+): Glu247 and Asp274. A disulfide bond links Cys323 and Cys327. His356 contributes to the Zn(2+) binding site.

The protein belongs to the peptidase M28 family. M28E subfamily. In terms of assembly, monomer. The cofactor is Zn(2+).

It localises to the secreted. In terms of biological role, extracellular aminopeptidase that allows assimilation of proteinaceous substrates. In Paracoccidioides brasiliensis (strain Pb18), this protein is Leucine aminopeptidase 1 (LAP1).